The following is a 1155-amino-acid chain: Alpha,alpha-trehalose-phosphate synthase [UDP-forming] 1 (1155 aa).

Residues 56-94 (LQRRRSVSSRGGSLRGSMDSLNDSGQNGAEDVIGVEDEE) are disordered. The span at 63 to 72 (SSRGGSLRGS) shows a compositional bias: low complexity.

This sequence in the N-terminal section; belongs to the glycosyltransferase 20 family. In the C-terminal section; belongs to the gob-1 trehalose phosphatase family.

The enzyme catalyses D-glucose 6-phosphate + UDP-alpha-D-glucose = alpha,alpha-trehalose 6-phosphate + UDP + H(+). Catalyzes the production of trehalose from glucose-6-phosphate and UDP-alpha-D-glucose in a 2 step process. This is Alpha,alpha-trehalose-phosphate synthase [UDP-forming] 1 (tps-1) from Aphelenchoides avenae (Mycophagous nematode worm).